Consider the following 706-residue polypeptide: Dual specificity calcium/calmodulin-dependent 3',5'-cyclic nucleotide phosphodiesterase 1C (706 aa).

Met-1 carries the post-translational modification N-acetylmethionine. The segment at 123–146 is calmodulin-binding; the sequence is EKPRFKSIVHAVQAGIFVERMYRR. The 378-residue stretch at 151 to 528 folds into the PDEase domain; the sequence is VGLSYPPAVI…ERWRAKVPKE (378 aa). The Proton donor role is filled by His-228. Zn(2+)-binding residues include His-232, His-268, Asp-269, and Asp-376. Asp-269 serves as a coordination point for Mg(2+). Disordered stretches follow at residues 453 to 497 and 524 to 655; these read LIDE…INNS and KVPK…IKPP. Polar residues-rich tracts occupy residues 456-476 and 483-497; these read ESSQ…INSS and VKSS…INNS. Basic and acidic residues-rich tracts occupy residues 524–554, 580–597, and 603–630; these read KVPK…EAKS, RKGD…KAGE, and DLKD…DGTK. The segment covering 638-647 has biased composition (polar residues); that stretch reads APSTSSTSRI.

Belongs to the cyclic nucleotide phosphodiesterase family. PDE1 subfamily. As to quaternary structure, homodimer. It depends on Zn(2+) as a cofactor. The cofactor is Mg(2+). Highly expressed in testis and at moderate levels in heart. As to expression, expressed at a moderate level in brain, the cerebellum, testis, heart and olfactory epithelium. In terms of tissue distribution, highly expressed in olfactory epithelium and at very low levels, if any, in other tissues. In the cochlea, expressed in the inner and outer hair cells (at protein level). In the brain, highly expressed in the neurons of the granule layer of the cerebellum, some Purkinje cells, the central amygdaloid nucleus, and the interpolar spinal trigem nucleus and, at moderate levels, in the glomerular and external plexiform layer of the olfactory bulb as well as in parts of the caudate-putamen and olfactory tubercle.

Its subcellular location is the lysosome. The catalysed reaction is a nucleoside 3',5'-cyclic phosphate + H2O = a nucleoside 5'-phosphate + H(+). It catalyses the reaction 3',5'-cyclic GMP + H2O = GMP + H(+). The enzyme catalyses 3',5'-cyclic AMP + H2O = AMP + H(+). Its activity is regulated as follows. Type I PDE are activated by the binding of calmodulin in the presence of Ca(2+). Different splice variants may have different sensitivities to Ca(2+). With respect to regulation, exhibits a higher sensitivity to Ca(2+) stimulation than isoforms 1 and 2. Its function is as follows. Calmodulin-dependent cyclic nucleotide phosphodiesterase with a dual specificity for cAMP and cGMP, which are key regulators of many important physiological processes. Exhibits high affinity for both cAMP and cGMP. Modulates the amplitude and duration of the cAMP signal in sensory cilia in response to odorant stimulation, hence contributing to the generation of action potentials. Regulates smooth muscle cell proliferation. Regulates the stability of growth factor receptors, including PDGFRB. This chain is Dual specificity calcium/calmodulin-dependent 3',5'-cyclic nucleotide phosphodiesterase 1C, found in Mus musculus (Mouse).